The following is a 107-amino-acid chain: U1-lycotoxin-Ls1q (107 aa).

The first 20 residues, 1-20 (MMKVLVVVALLVTLISYSSS), serve as a signal peptide directing secretion. Residues 21–41 (EGIDDLEADELLSLMANEQTR) constitute a propeptide that is removed on maturation. Intrachain disulfides connect C44-C59, C51-C68, C58-C86, and C70-C84.

This sequence belongs to the neurotoxin 19 (CSTX) family. 04 (U1-Lctx) subfamily. As to expression, expressed by the venom gland.

The protein localises to the secreted. This chain is U1-lycotoxin-Ls1q, found in Lycosa singoriensis (Wolf spider).